A 245-amino-acid chain; its full sequence is MREALQSLLVALQFLTRLPVRLSAMPTPEQFGRAVLCYPLVGVLIGVVLYGAARSLDGTPPLLQAALLLSLWVALSGALHLDGLADMADAWVGGLGDRERTLAIMKDPRSGPAAVVALVLVLLLKFGALAALLGAGRPGLLLLAPWLARSSLPLLFLTTPYARPGGLGQAIAEHLPARSLPWVLGVSFGLALAFGLSGLLALLVTLMLFAWLRSRFLARLGGTTGDTAGALVELTECAVLVALAL.

The next 5 membrane-spanning stretches (helical) occupy residues 31-51 (FGRAVLCYPLVGVLIGVVLYG), 61-81 (PLLQAALLLSLWVALSGALHL), 113-133 (AAVVALVLVLLLKFGALAALL), 138-158 (PGLLLLAPWLARSSLPLLFLT), and 192-212 (LAFGLSGLLALLVTLMLFAWL).

The protein belongs to the CobS family. Mg(2+) serves as cofactor.

Its subcellular location is the cell inner membrane. It catalyses the reaction alpha-ribazole + adenosylcob(III)inamide-GDP = adenosylcob(III)alamin + GMP + H(+). It carries out the reaction alpha-ribazole 5'-phosphate + adenosylcob(III)inamide-GDP = adenosylcob(III)alamin 5'-phosphate + GMP + H(+). It participates in cofactor biosynthesis; adenosylcobalamin biosynthesis; adenosylcobalamin from cob(II)yrinate a,c-diamide: step 7/7. Its function is as follows. Joins adenosylcobinamide-GDP and alpha-ribazole to generate adenosylcobalamin (Ado-cobalamin). Also synthesizes adenosylcobalamin 5'-phosphate from adenosylcobinamide-GDP and alpha-ribazole 5'-phosphate. The protein is Adenosylcobinamide-GDP ribazoletransferase of Pseudomonas paraeruginosa (strain DSM 24068 / PA7) (Pseudomonas aeruginosa (strain PA7)).